We begin with the raw amino-acid sequence, 123 residues long: Small ribosomal subunit protein uS12 (123 aa).

The disordered stretch occupies residues 1–28 (MPTIQQLIRTERSKVQKKTKSPALKQCP). Residue D89 is modified to 3-methylthioaspartic acid. Positions 104 to 123 (ATGVKDRKQGRSKYGTKRPK) are disordered. The segment covering 113-123 (GRSKYGTKRPK) has biased composition (basic residues).

It belongs to the universal ribosomal protein uS12 family. As to quaternary structure, part of the 30S ribosomal subunit. Contacts proteins S8 and S17. May interact with IF1 in the 30S initiation complex.

Functionally, with S4 and S5 plays an important role in translational accuracy. In terms of biological role, interacts with and stabilizes bases of the 16S rRNA that are involved in tRNA selection in the A site and with the mRNA backbone. Located at the interface of the 30S and 50S subunits, it traverses the body of the 30S subunit contacting proteins on the other side and probably holding the rRNA structure together. The combined cluster of proteins S8, S12 and S17 appears to hold together the shoulder and platform of the 30S subunit. This is Small ribosomal subunit protein uS12 from Gloeothece citriformis (strain PCC 7424) (Cyanothece sp. (strain PCC 7424)).